The chain runs to 53 residues: Rubredoxin (53 aa).

Residues 1–53 (MTKYVCTVCGYVYDPEVGDPDNNINPGTSFQDIPEDWVCPLCGVGKDQFEEEA) form the Rubredoxin-like domain. Fe cation contacts are provided by C6, C9, C39, and C42.

It belongs to the rubredoxin family. The cofactor is Fe(3+).

Its function is as follows. Rubredoxin is a small nonheme, iron protein lacking acid-labile sulfide. Its single Fe, chelated to 4 Cys, functions as an electron acceptor and may also stabilize the conformation of the molecule. This Acetoanaerobium sticklandii (strain ATCC 12662 / DSM 519 / JCM 1433 / CCUG 9281 / NCIMB 10654 / HF) (Clostridium sticklandii) protein is Rubredoxin.